A 433-amino-acid chain; its full sequence is Glutamyl-tRNA reductase (433 aa).

Substrate is bound by residues 49 to 52 (TCNR), S109, 114 to 116 (EGQ), and Q120. C50 acts as the Nucleophile in catalysis. 189–194 (GAGKMS) is an NADP(+) binding site.

Belongs to the glutamyl-tRNA reductase family. As to quaternary structure, homodimer.

It carries out the reaction (S)-4-amino-5-oxopentanoate + tRNA(Glu) + NADP(+) = L-glutamyl-tRNA(Glu) + NADPH + H(+). It participates in porphyrin-containing compound metabolism; protoporphyrin-IX biosynthesis; 5-aminolevulinate from L-glutamyl-tRNA(Glu): step 1/2. It functions in the pathway porphyrin-containing compound metabolism; chlorophyll biosynthesis. In terms of biological role, catalyzes the NADPH-dependent reduction of glutamyl-tRNA(Glu) to glutamate 1-semialdehyde (GSA). The sequence is that of Glutamyl-tRNA reductase from Acaryochloris marina (strain MBIC 11017).